We begin with the raw amino-acid sequence, 548 residues long: Probable 5-epi-aristolochene synthase 4 (548 aa).

Mg(2+) is bound by residues Asp-301, Asp-305, Asp-444, Thr-448, and Glu-452. Positions 301–305 match the DDXXD motif motif; that stretch reads DDTFD.

It belongs to the terpene synthase family. Monomer. Mg(2+) is required as a cofactor.

The protein resides in the cytoplasm. It carries out the reaction (2E,6E)-farnesyl diphosphate = (+)-5-epi-aristolochene + diphosphate. It participates in secondary metabolite biosynthesis; terpenoid biosynthesis. In terms of biological role, catalyzes the cyclization of trans,trans-farnesyl diphosphate (FPP) to the bicyclic intermediate 5-epi-aristolochene, initial step in the conversion of FPP to the sesquiterpenoid antifungal phytoalexin capsidiol. Produces germacrene A as an enzyme-bound intermediate that is not released by the enzyme, but is further cyclized to produce the bicyclic 5-epi-aristolochene. The sequence is that of Probable 5-epi-aristolochene synthase 4 from Nicotiana attenuata (Coyote tobacco).